The following is a 90-amino-acid chain: Small ribosomal subunit protein uS15 (90 aa).

The protein belongs to the universal ribosomal protein uS15 family. Part of the 30S ribosomal subunit. Forms a bridge to the 50S subunit in the 70S ribosome, contacting the 23S rRNA.

Functionally, one of the primary rRNA binding proteins, it binds directly to 16S rRNA where it helps nucleate assembly of the platform of the 30S subunit by binding and bridging several RNA helices of the 16S rRNA. Its function is as follows. Forms an intersubunit bridge (bridge B4) with the 23S rRNA of the 50S subunit in the ribosome. This is Small ribosomal subunit protein uS15 from Helicobacter pylori (strain Shi470).